We begin with the raw amino-acid sequence, 578 residues long: Vesicular acetylcholine transporter (578 aa).

Topologically, residues 1-32 (MASFQIPVINLEVREVKDIVWEKIQEPVNQRR) are cytoplasmic. A helical transmembrane segment spans residues 33-53 (LILVIVSIALLLDNMLYMVIV). Residues 54 to 98 (PIIPDYLREIGSFDDGPTPPPLRDNITGKIIPVHHDHHGQDSATG) lie on the Lumenal, vesicle side of the membrane. N-linked (GlcNAc...) asparagine glycosylation is present at N78. The helical transmembrane segment at 99-119 (ILFASKAIVQLMVNPFSGGLI) threads the bilayer. Over 120 to 125 (DKIGYD) the chain is Cytoplasmic. The helical transmembrane segment at 126–146 (LPMMIGLTIMFFSTAVFACGS) threads the bilayer. Residues 147–154 (SYSVLFFA) lie on the Lumenal, vesicle side of the membrane. Residues 155 to 175 (RSLQGAGSAFADTAGLAMIAD) traverse the membrane as a helical segment. Residues 176–187 (RFTEENERSQAL) lie on the Cytoplasmic side of the membrane. The helical transmembrane segment at 188–208 (GIALAFISFGCLVAPPFGGAL) threads the bilayer. Over 209–215 (YQFAGKE) the chain is Lumenal, vesicle. Residues 216–236 (VPFLILALVCLLDGLMLLLVM) traverse the membrane as a helical segment. Topologically, residues 237–263 (KPVKEAMKQSKDVQDQVIPIWRLLMDP) are cytoplasmic. Residues 264–284 (YIAVCAGALTMSNVALAFLEP) form a helical membrane-spanning segment. Residues 285-299 (TISLWMEDNMTTDNW) are Lumenal, vesicle-facing. N293 carries an N-linked (GlcNAc...) asparagine glycan. A helical membrane pass occupies residues 300–320 (KIGMVWLPAFFPHVLGVVITV). The Cytoplasmic segment spans residues 321–330 (KMARKYPQHQ). The helical transmembrane segment at 331-351 (WLMAAGGLALEGFSCFIIPFC) threads the bilayer. The Lumenal, vesicle portion of the chain corresponds to 352–355 (SGYK). Residues 356–376 (MLMLPICVICFGIALIDTALL) form a helical membrane-spanning segment. The Cytoplasmic segment spans residues 377 to 387 (PTLGYLVDVRY). A helical transmembrane segment spans residues 388–408 (VSVYGSIYAIADISYSIAYAV). Residues 409–413 (GPIIA) lie on the Lumenal, vesicle side of the membrane. The chain crosses the membrane as a helical span at residues 414–434 (GGVVEAIGFTALNFLIAFSNL). Residues 435–578 (AYVPVLRKLR…APANPFRQGF (144 aa)) are Cytoplasmic-facing. 2 stretches are compositionally biased toward low complexity: residues 507–534 (EYQQ…EQGG) and 549–563 (QQQQ…QQVQ). Residues 507-578 (EYQQQQQGYQ…APANPFRQGF (72 aa)) are disordered.

The protein belongs to the major facilitator superfamily. Vesicular transporter family.

It is found in the membrane. Involved in acetylcholine transport into synaptic vesicles. This chain is Vesicular acetylcholine transporter (VAChT), found in Drosophila melanogaster (Fruit fly).